The sequence spans 167 residues: Ribosome maturation factor RimM (167 aa).

One can recognise a PRC barrel domain in the interval 94 to 166 (DDRAWLHELE…YIHVPRFDEF (73 aa)).

The protein belongs to the RimM family. As to quaternary structure, binds ribosomal protein uS19.

It localises to the cytoplasm. An accessory protein needed during the final step in the assembly of 30S ribosomal subunit, possibly for assembly of the head region. Essential for efficient processing of 16S rRNA. May be needed both before and after RbfA during the maturation of 16S rRNA. It has affinity for free ribosomal 30S subunits but not for 70S ribosomes. The polypeptide is Ribosome maturation factor RimM (Chlorobium luteolum (strain DSM 273 / BCRC 81028 / 2530) (Pelodictyon luteolum)).